A 91-amino-acid polypeptide reads, in one-letter code: Small ribosomal subunit protein uS19 (91 aa).

This sequence belongs to the universal ribosomal protein uS19 family.

Its function is as follows. Protein S19 forms a complex with S13 that binds strongly to the 16S ribosomal RNA. This Metamycoplasma arthritidis (strain 158L3-1) (Mycoplasma arthritidis) protein is Small ribosomal subunit protein uS19.